The primary structure comprises 483 residues: 6-phosphogluconate dehydrogenase, decarboxylating (483 aa).

NADP(+) contacts are provided by residues 10–15 and 33–35; these read GLAVMG and NRT. Lysine 38 carries the post-translational modification N6-acetyllysine. Serine 57 bears the Phosphoserine mark. The residue at position 59 (lysine 59) is an N6-acetyllysine. NADP(+) contacts are provided by residues 75–77 and asparagine 103; that span reads VKA. Substrate contacts are provided by residues asparagine 103 and 129 to 131; that span reads SGG. Serine 129 carries the post-translational modification Phosphoserine. The active-site Proton acceptor is the lysine 184. Residue 187–188 coordinates substrate; the sequence is HN. Glutamate 191 acts as the Proton donor in catalysis. Substrate-binding residues include tyrosine 192, lysine 261, and arginine 288. Lysine 309 is modified (N6-acetyllysine). Arginine 447 and histidine 453 together coordinate substrate. 478–481 contributes to the NADP(+) binding site; sequence SSSY.

This sequence belongs to the 6-phosphogluconate dehydrogenase family. Homodimer.

The protein localises to the cytoplasm. It carries out the reaction 6-phospho-D-gluconate + NADP(+) = D-ribulose 5-phosphate + CO2 + NADPH. It participates in carbohydrate degradation; pentose phosphate pathway; D-ribulose 5-phosphate from D-glucose 6-phosphate (oxidative stage): step 3/3. Functionally, catalyzes the oxidative decarboxylation of 6-phosphogluconate to ribulose 5-phosphate and CO(2), with concomitant reduction of NADP to NADPH. The sequence is that of 6-phosphogluconate dehydrogenase, decarboxylating (PGD) from Homo sapiens (Human).